The sequence spans 727 residues: Putative ATP-dependent RNA helicase DHX15 (727 aa).

Residues 1 to 41 are disordered; it reads MSKRKHESSDSNKKAMKKQQNKIEEEEEEITNTTTTTTTTN. The segment covering 31 to 41 has biased composition (low complexity); the sequence is TNTTTTTTTTN. Residues 87–251 enclose the Helicase ATP-binding domain; it reads IKVIKENQVV…FENAPLIKVP (165 aa). 100 to 107 serves as a coordination point for ATP; sequence GETGSGKT. The short motif at 198–201 is the DEAH box element; that stretch reads DEAH. Residues 273-445 form the Helicase C-terminal domain; it reads AVRTVIDIHT…SVVLQLLKLG (173 aa).

This sequence belongs to the DEAD box helicase family. DEAH subfamily. DDX15/PRP43 sub-subfamily.

The protein localises to the nucleus. It carries out the reaction ATP + H2O = ADP + phosphate + H(+). Functionally, pre-mRNA processing factor involved in disassembly of spliceosomes after the release of mature mRNA. This Dictyostelium discoideum (Social amoeba) protein is Putative ATP-dependent RNA helicase DHX15 (dhx15).